Consider the following 113-residue polypeptide: Large ribosomal subunit protein eL33 (113 aa).

It belongs to the eukaryotic ribosomal protein eL33 family.

The polypeptide is Large ribosomal subunit protein eL33 (RPL35A) (Tetrahymena thermophila (strain SB210)).